The sequence spans 95 residues: Large ribosomal subunit protein bL25 (95 aa).

The protein belongs to the bacterial ribosomal protein bL25 family. In terms of assembly, part of the 50S ribosomal subunit; part of the 5S rRNA/L5/L18/L25 subcomplex. Contacts the 5S rRNA. Binds to the 5S rRNA independently of L5 and L18.

Functionally, this is one of the proteins that binds to the 5S RNA in the ribosome where it forms part of the central protuberance. The polypeptide is Large ribosomal subunit protein bL25 (Tolumonas auensis (strain DSM 9187 / NBRC 110442 / TA 4)).